The chain runs to 377 residues: Nitric oxide reductase FlRd-NAD(+) reductase (377 aa).

The protein belongs to the FAD-dependent oxidoreductase family. It depends on FAD as a cofactor.

It localises to the cytoplasm. The enzyme catalyses 2 reduced [nitric oxide reductase rubredoxin domain] + NAD(+) + H(+) = 2 oxidized [nitric oxide reductase rubredoxin domain] + NADH. The protein operates within nitrogen metabolism; nitric oxide reduction. One of at least two accessory proteins for anaerobic nitric oxide (NO) reductase. Reduces the rubredoxin moiety of NO reductase. The sequence is that of Nitric oxide reductase FlRd-NAD(+) reductase from Escherichia coli (strain SE11).